We begin with the raw amino-acid sequence, 106 residues long: Iron-sulfur cluster assembly protein CyaY (106 aa).

This sequence belongs to the frataxin family.

Its function is as follows. Involved in iron-sulfur (Fe-S) cluster assembly. May act as a regulator of Fe-S biogenesis. This Pectobacterium atrosepticum (strain SCRI 1043 / ATCC BAA-672) (Erwinia carotovora subsp. atroseptica) protein is Iron-sulfur cluster assembly protein CyaY.